We begin with the raw amino-acid sequence, 473 residues long: Phosphatidylserine synthase 1 (473 aa).

Residues 1–35 (MAACVGSRTLSKDDVNYRLHFRMINEQQVEDITLE) are Cytoplasmic-facing. The chain crosses the membrane as a helical span at residues 36–56 (FFYRPHTITLLSFTILSLMAF). The Lumenal portion of the chain corresponds to 57–72 (AFTRDDSVPEENIWRG). A helical membrane pass occupies residues 73-93 (ILSVIFFFLIISVLAFPNGPF). Residues 94–102 (TRPHPAIWR) lie on the Cytoplasmic side of the membrane. The helical transmembrane segment at 103 to 123 (MVFGLSVLYFLFLVFVLFLNF) threads the bilayer. Over 124–186 (EQVKAVMYWL…AMKALLIRSY (63 aa)) the chain is Lumenal. A helical membrane pass occupies residues 187–207 (GLCWTISITWELTELFFMHLL). At 208 to 216 (PNFAECWWD) the chain is on the cytoplasmic side. The chain crosses the membrane as a helical span at residues 217–237 (QVILDILLCNGGGIWLGMVVC). The Lumenal segment spans residues 238–286 (RFLEMRTYHWASFKDIHTTTGKIKRAVLQFTPASWTYVRWFDPKSSFQR). A helical transmembrane segment spans residues 287-307 (VAGIYLFMIIWQLTELNTFFL). The Cytoplasmic portion of the chain corresponds to 308–319 (KHIFVFQASHPL). A helical transmembrane segment spans residues 320–342 (SWGRILFIGIITAPTVRQYYAYL). At 343–355 (TDTQCKRVGTQCW) the chain is on the lumenal side. The chain crosses the membrane as a helical span at residues 356–376 (VFGVIAFLEAIVCIKFGQDLF). The Cytoplasmic segment spans residues 377-380 (SKTQ). Residues 381–401 (ILYVVFWLLCVAFTTFLCLYG) form a helical membrane-spanning segment. Residues 402–473 (MVWYAEYYGH…SKVTNGIGKK (72 aa)) are Lumenal-facing. Residues 420 to 473 (EDSPYSPDASWLHSKFSKGADNSPPKHPVNSESHSSRRRNRHSRSKVTNGIGKK) are disordered. Residues 455–464 (SRRRNRHSRS) show a composition bias toward basic residues.

Belongs to the phosphatidyl serine synthase family.

It localises to the endoplasmic reticulum membrane. The enzyme catalyses a 1,2-diacyl-sn-glycero-3-phosphoethanolamine + L-serine = a 1,2-diacyl-sn-glycero-3-phospho-L-serine + ethanolamine. The catalysed reaction is a 1,2-diacyl-sn-glycero-3-phosphocholine + L-serine = a 1,2-diacyl-sn-glycero-3-phospho-L-serine + choline. It functions in the pathway phospholipid metabolism; phosphatidylserine biosynthesis. Catalyzes a base-exchange reaction in which the polar head group of phosphatidylethanolamine (PE) or phosphatidylcholine (PC) is replaced by L-serine. Catalyzes mainly the conversion of phosphatidylcholine but also converts, in vitro and to a lesser extent, phosphatidylethanolamine. This Gallus gallus (Chicken) protein is Phosphatidylserine synthase 1 (PTDSS1).